Here is a 1724-residue protein sequence, read N- to C-terminus: Protein scribble homolog (1724 aa).

Positions 1–821 (MLKCIPLWRC…MTVLRERMVE (821 aa)) are sufficient for targeting to adherens junction. LRR repeat units follow at residues 11-34 (NRHV…IYRY), 35-58 (NRSL…FFRL), 59-81 (HNLR…VANF), 83-105 (QLVE…KFCQ), 107-127 (LEIA…FTQL), 128-150 (RGLA…IGNL), 151-174 (SNLV…SFLV), 176-196 (LEQL…LGAL), 197-219 (PNLR…LGNL), 221-242 (QLVC…ISGL), 244-265 (ALTD…IGSL), 266-288 (KKLS…IGEC), 289-311 (ENLT…LGKL), 312-334 (KKLT…LGGC), 336-357 (SLNV…LANA), 359-380 (ELHV…LANL), and 382-405 (LKAM…DDEQ). Disordered regions lie at residues 451–484 (RDDS…LKVM), 496–620 (YTAR…RKDT), and 646–683 (SHDG…HTPF). Positions 518–534 (SNQSHDSQASSSTTSAT) are enriched in low complexity. Residues 554–567 (VQEEEDLDEMEVEY) show a composition bias toward acidic residues. The span at 574–583 (FAEEPIIRGG) shows a compositional bias: basic and acidic residues. A compositionally biased stretch (acidic residues) spans 584–598 (DEDDDYDNDDDDAER). Positions 611–620 (EKQRLIRKDT) are enriched in basic and acidic residues. The span at 661 to 678 (RDGEDDEEEEEDEDEEDD) shows a compositional bias: acidic residues. 4 consecutive PDZ domains span residues 731-818 (TLSI…LRER), 867-955 (ATCL…DREQ), 1005-1094 (EVTL…RRDP), and 1101-1193 (EIVI…CDGF). The tract at residues 955-995 (QSSVGGASPRTRPHSPPPPEPSDSPEQEDGGDEHLGNHLNC) is disordered. 4 disordered regions span residues 1283–1407 (LQKV…DRQK), 1414–1433 (KQQT…EDDL), 1449–1468 (REFM…AKQV), and 1488–1555 (SLGS…GESA). Residues 1295-1306 (FRIDSPVRDAAH) are compositionally biased toward basic and acidic residues. Polar residues-rich tracts occupy residues 1308 to 1329 (PHNS…NAST), 1346 to 1357 (PASQDGHSSPNP), and 1364 to 1385 (PINS…KQPS). The span at 1395–1407 (HSPEQRSFKDRQK) shows a compositional bias: basic and acidic residues. The stretch at 1430–1461 (EDDLKKMKEEEAKRIEQRAREFMLDEDEEEEE) forms a coiled coil. Positions 1453–1463 (LDEDEEEEEED) are enriched in acidic residues. Residues 1490–1506 (GSPTSRQCATPPNYSAT) are compositionally biased toward polar residues. The segment covering 1507–1518 (PPSHCGSSGPSS) has biased composition (low complexity). Positions 1521–1538 (GKGDSQRNSVEDSFRLEQ) are enriched in basic and acidic residues. Serine 1609 bears the Phosphoserine mark. The disordered stretch occupies residues 1621–1684 (IAKSKEGKKR…FMDESSSNAV (64 aa)). A compositionally biased stretch (basic and acidic residues) spans 1623 to 1632 (KSKEGKKRGT).

In terms of processing, palmitoylated.

It localises to the cell membrane. The protein localises to the cell junction. The protein resides in the adherens junction. Its subcellular location is the cell projection. It is found in the lamellipodium. It localises to the cytoplasm. The protein localises to the postsynapse. The protein resides in the presynapse. Functionally, scaffold protein involved in different aspects of polarized cells differentiation regulating epithelial and neuronal morphogenesis. Regulates the caudal migration of the nVII motor neurons. Required for convergent extension movements during gastrulation. The polypeptide is Protein scribble homolog (scrib) (Danio rerio (Zebrafish)).